The sequence spans 1904 residues: MGSQHQSQHNSALIQAARDGEATLSVAFGGQGPSNLNCFNDLLELNKTYGSTLRPLIHTADATLSELASLPHRSGFHEDEGFETLDWLQDPKQAPSREYLALSPMSFPINTLLSLCNYCVTLRALRLDPGQFRSSLHNVVGHSQGIFAAAAIAKADSWESFLEAAEIALKISFWVGLESHTAAPPSHISAAAVQDCVEHGEGQPSSMLGITGLNRAQVEMLVERVNKSLSDDDRHVCLALANSRDKYTIAGPPHSLRAVCVQIREIRAADGVDQSRILFNKRKQEVDALFLPISAPYHSQYLKQVSNNVLDALDVDLVGSELGIPLLHTQSGQNLQDWKSKSIIKAIVCAVTTDMVEWPDVCQRLGSSYILGFGPGNIGNLIHESTEGTGVRVIQMNDRSPGSRGIGARAELFSEEMPPQALDWKQTFGPRLVLDHRGDVQIQTRMTQLLNAPPVMVAGMTPTTVTWDFVSCVMQAGYHVELAGGGYSSEARFEEALRRLAASIPIYRGITCNLLYANPQTIAWQVAVLRRLIKEGISIEGVTIGAGVPSPDVIKEYIAIGLKHISFKPGSIAAIDEVIEIAQAHPQFPIGLQWTGGRAGGHHSHEDLHLPILKTYARIRRCSNIVLIAGSGFGGGSDTYPYISGDWSKSLSYPPMPFDGILLGSRVMVAKEAHTSPQAKQLIVQTEGVGDNDWHTSFETPTGGVITITSEHGQPIHMLATRGVMLWKEFDKRIFSIKDAAKRLSYIRAHREEIITRLNKDYQKPWFGVNGDGQNVDLDRMTYREVLGRMCQLMSRGDNGWTDPSWLAMVKDFVEIAGERFGCQVDAHATKAPEVRTAFEATLGGSVDETLYPEDVALVLELLRRRGRKPPPFVPALDENFETWCKKDSLWQSEDVDSLVGKDVQRACIIQGPVAVRHSTIHDEPVQDILDNICNFHIESLLQSGETPGVARKQDLGRPNSIKKSVPGVQITTEKTTIRYQVHKTDKLPPEMDTLIEHIVGPAADCWTHHCLKDEWVFRDQARLRNPIRAAFLRQIQPGEVIEVRLSRDGNTQAIALKTALFGKSSLQTVLRIASTDGKSIKVALTPPSFLSDKPLGLQFAYQLSRKSRGSKLVEVTPNRLDAIKGFYAQLWVDSNQDVKEAGLNSEFWGEPTTLLAQDVQNYTAVVSRSTSPQLQAWNPTGSVPVDYCIVLAWTALTKPLTIPALQCDLLNLLHRSVNFKYAANARPLRLGDVTQTVSRITSLTIQPTGKLVEVSAELRRNDETVVTITTEFFIVGQFEDYETQFKSFEEPLFEVRVHSVTRQALLQSRKWLVLDDPSMDLAGLTLAFKLNTHTTFDHEGKVGALQVTGSVSRVESTGFDTRIGKVYFKKDSCNGNPVVDFLNRHGYPRVTRQPLENPGWNEGSTVLMKAPAKSNQYAMASKDTNPLHVCGVFARYAGLPDTVVHGMHTSAIVRRAVEWAVGDSDRSRFKKWQVSFEGMVRPNDRLKIQLQHTAMEHGRMIMKVQAFNDETGDKVIEAEAEVEQPRTGYVFCGQGSQEKGMGMSLYNARPEAKALWDRGDQFLREQYGFSLLSLVRENPTTLTINFGGRRGKRIRDNYLAMTKKTSLKADAKDVCIVQGLTPTSTSHTFSETKGLLFSTQFSQPAIALMEMVEHEHLFAKGVVQPSALFAGHSLGEYAALGACTTFMPFESLLTLIFYRGLKMQNALERDANGRTDYSMMAADPSRVGKAGFDERAFQCLVELVNEETGLLMEIVNHNVRSQQYVCAGHFRALWILGKVCDDLAKHPKIHLLSMQDLKDMVTTHVPAAGKLTNDIVLTRGKATIPLNGIDIPFHSTMLRGEIEHFRRYLLTKVNVPDIKPNELVGKWIPNVVGRPFSLDRSYIEHVQSVTGSEPLQKMLKAMA.

Positions 24-395 (LSVAFGGQGP…TEGTGVRVIQ (372 aa)) are acetyltransferase (AT) domain. The interval 447-691 (TQLLNAPPVM…LIVQTEGVGD (245 aa)) is enoyl reductase (ER) domain. Residues 1001-1491 (GPAADCWTHH…RPNDRLKIQL (491 aa)) are dehydratase (DH) domain. The 114-residue stretch at 1399 to 1512 (PGWNEGSTVL…MKVQAFNDET (114 aa)) folds into the MaoC-like domain. Residues 1530–1893 (YVFCGQGSQE…IEHVQSVTGS (364 aa)) form a malonyl/palmitoyl transferase (MT/PT) domain region.

The protein belongs to the fungal fatty acid synthetase subunit beta family. [Alpha(6)beta(6)] hexamers of two multifunctional subunits (alpha and beta).

The enzyme catalyses acetyl-CoA + n malonyl-CoA + 2n NADPH + 4n H(+) = a long-chain-acyl-CoA + n CoA + n CO2 + 2n NADP(+).. It carries out the reaction holo-[ACP] + acetyl-CoA = acetyl-[ACP] + CoA. The catalysed reaction is holo-[ACP] + malonyl-CoA = malonyl-[ACP] + CoA. It catalyses the reaction a (3R)-hydroxyacyl-[ACP] = a (2E)-enoyl-[ACP] + H2O. The enzyme catalyses a 2,3-saturated acyl-[ACP] + NAD(+) = a (2E)-enoyl-[ACP] + NADH + H(+). It carries out the reaction (9Z)-octadecenoyl-[ACP] + H2O = (9Z)-octadecenoate + holo-[ACP] + H(+). The protein operates within mycotoxin biosynthesis. Its function is as follows. Fatty acid synthase beta subunit; part of the fragmented gene cluster that mediates the biosynthesis of dothistromin (DOTH), a polyketide toxin very similar in structure to the aflatoxin precursor, versicolorin B. The first step of the pathway is the conversion of acetate to norsolorinic acid (NOR) and requires the fatty acid synthase subunits hexA and hexB, as well as the polyketide synthase pksA. PksA combines a hexanoyl starter unit and 7 malonyl-CoA extender units to synthesize the precursor NOR. The hexanoyl starter unit is provided to the acyl-carrier protein (ACP) domain by the fungal fatty acid synthase hexA/hexB. The second step is the conversion of NOR to averantin (AVN) and requires the norsolorinic acid ketoreductase nor1, which catalyzes the dehydration of norsolorinic acid to form (1'S)-averantin. The cytochrome P450 monooxygenase avnA then catalyzes the hydroxylation of AVN to 5'hydroxyaverantin (HAVN). The next step is performed by adhA that transforms HAVN to averufin (AVF). Averufin might then be converted to hydroxyversicolorone by cypX and avfA. Hydroxyversicolorone is further converted versiconal hemiacetal acetate (VHA) by moxY. VHA is then the substrate for the versiconal hemiacetal acetate esterase est1 to yield versiconal (VAL). Versicolorin B synthase vbsA then converts VAL to versicolorin B (VERB) by closing the bisfuran ring. Then, the activity of the versicolorin B desaturase verB leads to versicolorin A (VERA). DotB, a predicted chloroperoxidase, may perform epoxidation of the A-ring of VERA. Alternatively, a cytochrome P450, such as cypX or avnA could catalyze this step. It is also possible that another, uncharacterized, cytochrome P450 enzyme is responsible for this step. Opening of the epoxide could potentially be achieved by the epoxide hydrolase epoA. However, epoA seems not to be required for DOTH biosynthesis, but other epoxide hydrolases may have the ability to complement this hydrolysis. Alternatively, opening of the epoxide ring could be achieved non-enzymatically. The next step is the deoxygenation of ring A to yield the 5,8-dihydroxyanthraquinone which is most likely catalyzed by the NADPH dehydrogenase encoded by ver1. The last stages of DOTH biosynthesis are proposed to involve hydroxylation of the bisfuran. OrdB and norB might have oxidative roles here. An alternative possibility is that cytochrome P450 monoogenases such as avnA and cypX might perform these steps in addition to previously proposed steps. This Dothistroma septosporum (strain NZE10 / CBS 128990) (Red band needle blight fungus) protein is Fatty acid synthase beta subunit hexB.